We begin with the raw amino-acid sequence, 154 residues long: D-aminoacyl-tRNA deacylase (154 aa).

Positions 138-139 match the Gly-cisPro motif, important for rejection of L-amino acids motif; sequence GP.

The protein belongs to the DTD family. In terms of assembly, homodimer.

The protein resides in the cytoplasm. The catalysed reaction is glycyl-tRNA(Ala) + H2O = tRNA(Ala) + glycine + H(+). The enzyme catalyses a D-aminoacyl-tRNA + H2O = a tRNA + a D-alpha-amino acid + H(+). Its function is as follows. An aminoacyl-tRNA editing enzyme that deacylates mischarged D-aminoacyl-tRNAs. Also deacylates mischarged glycyl-tRNA(Ala), protecting cells against glycine mischarging by AlaRS. Acts via tRNA-based rather than protein-based catalysis; rejects L-amino acids rather than detecting D-amino acids in the active site. By recycling D-aminoacyl-tRNA to D-amino acids and free tRNA molecules, this enzyme counteracts the toxicity associated with the formation of D-aminoacyl-tRNA entities in vivo and helps enforce protein L-homochirality. This Halorhodospira halophila (strain DSM 244 / SL1) (Ectothiorhodospira halophila (strain DSM 244 / SL1)) protein is D-aminoacyl-tRNA deacylase.